Here is a 103-residue protein sequence, read N- to C-terminus: Mitochondrial import inner membrane translocase subunit Tim10 B (103 aa).

A Twin CX3C motif motif is present at residues 28-52 (CFQRCVPSLHHRALDAEEEACLHSC). 2 cysteine pairs are disulfide-bonded: Cys28-Cys52 and Cys32-Cys48.

The protein belongs to the small Tim family. Component of the TIM22 complex, which core is composed of TIMM22, associated with TIMM10 (TIMM10A and/or TIMM10B), TIMM9, AGK and TIMM29. In terms of tissue distribution, ubiquitous, with highest expression in heart, kidney, liver and skeletal muscle.

It is found in the mitochondrion inner membrane. Its function is as follows. Component of the TIM22 complex, a complex that mediates the import and insertion of multi-pass transmembrane proteins into the mitochondrial inner membrane. The TIM22 complex forms a twin-pore translocase that uses the membrane potential as the external driving force. In the TIM22 complex, it may act as a docking point for the soluble 70 kDa complex that guides the target proteins in transit through the aqueous mitochondrial intermembrane space. This chain is Mitochondrial import inner membrane translocase subunit Tim10 B (TIMM10B), found in Homo sapiens (Human).